Consider the following 449-residue polypeptide: Glucose-6-phosphate isomerase (449 aa).

E291 functions as the Proton donor in the catalytic mechanism. Residues H312 and K426 contribute to the active site.

It belongs to the GPI family.

The protein localises to the cytoplasm. It catalyses the reaction alpha-D-glucose 6-phosphate = beta-D-fructose 6-phosphate. The protein operates within carbohydrate biosynthesis; gluconeogenesis. It participates in carbohydrate degradation; glycolysis; D-glyceraldehyde 3-phosphate and glycerone phosphate from D-glucose: step 2/4. Functionally, catalyzes the reversible isomerization of glucose-6-phosphate to fructose-6-phosphate. The chain is Glucose-6-phosphate isomerase from Streptococcus pyogenes serotype M49 (strain NZ131).